A 79-amino-acid chain; its full sequence is Calcium/calmodulin-dependent protein kinase II inhibitor 2 (79 aa).

Residues 43-69 (KRPPKLGQIGRAKRVVIEDDRIDEVLK) are inhibitory domain.

Belongs to the CAMK2N family.

The protein resides in the nucleus. It localises to the cytoplasm. The protein localises to the cytosol. Potent and specific cellular inhibitor of CaM-kinase II (CAMK2). Traps Ca(2+)/calmodulin on CAMK2. The protein is Calcium/calmodulin-dependent protein kinase II inhibitor 2 (camk2n2) of Xenopus tropicalis (Western clawed frog).